The chain runs to 557 residues: Isocitrate lyase (557 aa).

Residue Thr53 is modified to Phosphothreonine. 106–108 is a binding site for substrate; that stretch reads SGW. A Mg(2+)-binding site is contributed by Asp179. Cys217 acts as the Proton acceptor in catalysis. Substrate contacts are provided by residues 218–219, Arg254, 437–441, and Thr471; these read GH and NLSPS.

Belongs to the isocitrate lyase/PEP mutase superfamily. Isocitrate lyase family. As to quaternary structure, homotetramer. The cofactor is Mg(2+). Post-translationally, phosphorylated in response to elevated glucose levels, leading first to reversible inactivation of the enzyme (short-term inactivation), and at a later stage to proteolytic degradation of the protein (long-term inactivation).

It is found in the cytoplasm. It localises to the secreted. The protein localises to the extracellular space. The protein resides in the extracellular matrix. Its subcellular location is the vacuole. It catalyses the reaction D-threo-isocitrate = glyoxylate + succinate. The catalysed reaction is (2S,3R)-3-hydroxybutane-1,2,3-tricarboxylate = pyruvate + succinate. The protein operates within carbohydrate metabolism; glyoxylate cycle; (S)-malate from isocitrate: step 1/2. With respect to regulation, phosphorylated and inactivated after addition of glucose to the cell culture (repressing conditions). Catalyzes the formation of succinate and glyoxylate from isocitrate, a key step of the glyoxylate cycle, which operates as an anaplerotic route for replenishing the tricarboxylic acid cycle. Required for growth on ethanol or acetate, but dispensable when fermentable carbon sources are available. Also acts on 2-methylisocitrate. This chain is Isocitrate lyase, found in Saccharomyces cerevisiae (strain ATCC 204508 / S288c) (Baker's yeast).